The sequence spans 175 residues: Hypoxanthine-guanine phosphoribosyltransferase (175 aa).

Residues Lys40 and Gly41 each coordinate diphosphate. Residues Glu96 and Asp97 each coordinate Mg(2+). Asp100 serves as the catalytic Proton acceptor. GMP-binding positions include Lys128, Phe149–Leu150, and Asp156. Diphosphate is bound at residue Arg162.

The protein belongs to the purine/pyrimidine phosphoribosyltransferase family. Requires Mg(2+) as cofactor.

It is found in the cytoplasm. It catalyses the reaction IMP + diphosphate = hypoxanthine + 5-phospho-alpha-D-ribose 1-diphosphate. The enzyme catalyses GMP + diphosphate = guanine + 5-phospho-alpha-D-ribose 1-diphosphate. Its pathway is purine metabolism; IMP biosynthesis via salvage pathway; IMP from hypoxanthine: step 1/1. The protein operates within purine metabolism; GMP biosynthesis via salvage pathway; GMP from guanine: step 1/1. Functionally, purine salvage pathway enzyme that catalyzes the transfer of the ribosyl-5-phosphate group from 5-phospho-alpha-D-ribose 1-diphosphate (PRPP) to the N9 position of the 6-oxopurines hypoxanthine and guanine to form the corresponding ribonucleotides IMP (inosine 5'-monophosphate) and GMP (guanosine 5'-monophosphate), with the release of PPi. The polypeptide is Hypoxanthine-guanine phosphoribosyltransferase (hpt) (Mycoplasma genitalium (strain ATCC 33530 / DSM 19775 / NCTC 10195 / G37) (Mycoplasmoides genitalium)).